Reading from the N-terminus, the 175-residue chain is Co-chaperone protein HscB homolog (175 aa).

The J domain occupies 2–76; it reads NYFALFNLTP…RAEHMLELRG (75 aa).

This sequence belongs to the HscB family. In terms of assembly, interacts with HscA and stimulates its ATPase activity.

Functionally, co-chaperone involved in the maturation of iron-sulfur cluster-containing proteins. Seems to help targeting proteins to be folded toward HscA. In Pseudoalteromonas atlantica (strain T6c / ATCC BAA-1087), this protein is Co-chaperone protein HscB homolog.